The chain runs to 73 residues: Large ribosomal subunit protein bL31 (73 aa).

Belongs to the bacterial ribosomal protein bL31 family. Type A subfamily. As to quaternary structure, part of the 50S ribosomal subunit.

Binds the 23S rRNA. The polypeptide is Large ribosomal subunit protein bL31 (Sinorhizobium fredii (strain NBRC 101917 / NGR234)).